We begin with the raw amino-acid sequence, 299 residues long: ATP phosphoribosyltransferase (299 aa).

Belongs to the ATP phosphoribosyltransferase family. Long subfamily. Mg(2+) serves as cofactor.

The protein localises to the cytoplasm. The enzyme catalyses 1-(5-phospho-beta-D-ribosyl)-ATP + diphosphate = 5-phospho-alpha-D-ribose 1-diphosphate + ATP. Its pathway is amino-acid biosynthesis; L-histidine biosynthesis; L-histidine from 5-phospho-alpha-D-ribose 1-diphosphate: step 1/9. Its activity is regulated as follows. Feedback inhibited by histidine. Catalyzes the condensation of ATP and 5-phosphoribose 1-diphosphate to form N'-(5'-phosphoribosyl)-ATP (PR-ATP). Has a crucial role in the pathway because the rate of histidine biosynthesis seems to be controlled primarily by regulation of HisG enzymatic activity. The protein is ATP phosphoribosyltransferase of Shewanella baltica (strain OS155 / ATCC BAA-1091).